The chain runs to 1856 residues: Protein TANC1 (1856 aa).

Position 1 is an N-acetylmethionine (methionine 1). Disordered stretches follow at residues 1 to 45 (MLKA…LSTT), 58 to 130 (SMSL…SCSP), 203 to 222 (KSPC…KDSG), 262 to 296 (RADN…PVPY), and 437 to 489 (IASS…RPRE). A compositionally biased stretch (basic and acidic residues) spans 8-21 (KSREGGKGSKKEAG). Residues 29-45 (PALSSSGDSPVNSLSTT) show a composition bias toward polar residues. Phosphoserine occurs at positions 60, 63, 64, 204, 267, and 462. The span at 60 to 77 (SLPSSPLLPRQSLLTQSR) shows a compositional bias: low complexity. Positions 203 to 216 (KSPCETISSPSSTL) are enriched in polar residues. A compositionally biased stretch (low complexity) spans 439 to 475 (SSSPSLSPKSSDPTQDLPGTPLLSPSSSTSALSVTRT). ANK repeat units lie at residues 893–925 (EGLS…NVNY), 931–960 (NNAP…CLDG), 964–993 (NGMN…RVDH), 997–1026 (KGQC…SAGP), 1037–1066 (ALQQ…EHEI), 1075–1104 (WGET…AVSR), 1108–1137 (RGVP…DVNL), 1141–1170 (QGRT…ALSS), 1174–1203 (EGLS…EIDQ), 1207–1236 (NGRT…VIEH), and 1240–1269 (SGMR…KLGN). TPR repeat units lie at residues 1286 to 1319 (LQKL…FPRE), 1333 to 1366 (VSLY…KPKS), and 1368 to 1400 (EAFY…CPNN). Residues 1417 to 1426 (LQRNQQQKQQ) are compositionally biased toward low complexity. Disordered stretches follow at residues 1417 to 1597 (LQRN…FGDR), 1636 to 1720 (DMAP…NTPF), and 1832 to 1856 (HVST…ESNV). Phosphoserine is present on residues serine 1436 and serine 1463. The segment covering 1454 to 1463 (EEAEEEDTSS) has biased composition (acidic residues). 2 stretches are compositionally biased toward polar residues: residues 1490-1505 (EGLQ…QSRA) and 1524-1556 (PTKQ…VSSQ). Over residues 1656-1686 (SLSSSGSSGSPSSSIKMSSSTSSLTSSSSVS) the composition is skewed to low complexity. A phosphoserine mark is found at serine 1665, serine 1673, and serine 1674.

The protein belongs to the TANC family. In terms of assembly, interacts probably directly with DLG1, DLG4, HOMER1. Interacts with DLGAP1, INA, CAMK2A, GRIN2B and GRIA1. Interacts with TNIK and MINK1. Phosphorylated; by MINK1 and TNIK upon stimulation by RAP2A.

The protein localises to the postsynaptic density. Functionally, may be a scaffold component in the postsynaptic density. This Mus musculus (Mouse) protein is Protein TANC1 (Tanc1).